The primary structure comprises 2637 residues: Nonribisomal peptide synthetase valB (2637 aa).

The interval 1 to 376 is condensation 1; sequence MADGADYTQR…KALIRSPPST (376 aa). The segment at 413–803 is adenylation 1; the sequence is SQASRRPDAA…VGRRDNQIKL (391 aa). Residues 946–1022 enclose the Carrier 1 domain; sequence PPANPPERAL…EAASEIKEPT (77 aa). S983 is modified (O-(pantetheine 4'-phosphoryl)serine). The segment at 1016 to 1045 is disordered; the sequence is SEIKEPTDASAPSPSPISRDLPLQKSNHDR. A condensation 2 region spans residues 1063 to 1506; it reads VEAIYPCTAL…LSRADMSLLQ (444 aa). An adenylation 2 region spans residues 1524–1933; the sequence is AREVAHQRPL…EGRKDTRVKL (410 aa). The region spanning 2078–2154 is the Carrier 2 domain; it reads KEVTDDQAFM…YMVSKTSVSN (77 aa). S2115 is modified (O-(pantetheine 4'-phosphoryl)serine). A condensation 3 region spans residues 2193–2582; it reads ESVAPATDAQ…LWMGAYLDAA (390 aa).

This sequence belongs to the NRP synthetase family.

Its pathway is secondary metabolite biosynthesis. Functionally, nonribisomal peptide synthetase; part of the gene cluster that mediates the biosynthesis of valactamides. The first step of the pathway is performed by the highly reducing polyketide synthase valA that produces the polyketide part of the final products. An acetyl starter unit is incorporated by the ketosynthase domain of valA, and subsequently 6 malonyl-CoA-derived ketide units are incorporated and fully reduced to their respective alkane forms by the action of the ketoreductase, dehydratase, and enoylreductase domains (except for the penultimate unit, which is reduced only to the alkene). The final five ketide units are each proposed to be alpha-methylated by the methyltransferase domain before ketone reduction by the ketoreductase domain. The C1 domain of the nonribisomal peptide synthetase valB then catalyzes amide bond formation between the heptaketide chain and L-valine (L-Val) attached to the T1 domain. The C2 domain incorporating L-isoleucine (L-Ile) then carries out chain elongation, which is followed by macrolactonization by the Ct domain to release the final product. This chain is Nonribisomal peptide synthetase valB, found in Aspergillus terreus.